The sequence spans 188 residues: ATP synthase subunit b 1 (188 aa).

A helical transmembrane segment spans residues 35–55 (VHFSSHFFWLAISFGFFYLFI).

Belongs to the ATPase B chain family. F-type ATPases have 2 components, F(1) - the catalytic core - and F(0) - the membrane proton channel. F(1) has five subunits: alpha(3), beta(3), gamma(1), delta(1), epsilon(1). F(0) has three main subunits: a(1), b(2) and c(10-14). The alpha and beta chains form an alternating ring which encloses part of the gamma chain. F(1) is attached to F(0) by a central stalk formed by the gamma and epsilon chains, while a peripheral stalk is formed by the delta and b chains.

It localises to the cell inner membrane. Functionally, f(1)F(0) ATP synthase produces ATP from ADP in the presence of a proton or sodium gradient. F-type ATPases consist of two structural domains, F(1) containing the extramembraneous catalytic core and F(0) containing the membrane proton channel, linked together by a central stalk and a peripheral stalk. During catalysis, ATP synthesis in the catalytic domain of F(1) is coupled via a rotary mechanism of the central stalk subunits to proton translocation. Its function is as follows. Component of the F(0) channel, it forms part of the peripheral stalk, linking F(1) to F(0). In Bartonella tribocorum (strain CIP 105476 / IBS 506), this protein is ATP synthase subunit b 1.